Consider the following 158-residue polypeptide: UPF0725 protein At3g57210 (158 aa).

It belongs to the UPF0725 (EMB2204) family.

In Arabidopsis thaliana (Mouse-ear cress), this protein is UPF0725 protein At3g57210.